The following is a 194-amino-acid chain: Large ribosomal subunit protein bL9 (194 aa).

Residues 148 to 194 (QDEAERQARGENVINSQFEEDRAAEAEAAQDMAEGGAGSFEGDHYEA) form a disordered region.

This sequence belongs to the bacterial ribosomal protein bL9 family.

In terms of biological role, binds to the 23S rRNA. The chain is Large ribosomal subunit protein bL9 from Caulobacter vibrioides (strain ATCC 19089 / CIP 103742 / CB 15) (Caulobacter crescentus).